A 480-amino-acid chain; its full sequence is tRNA-2-methylthio-N(6)-dimethylallyladenosine synthase (480 aa).

The 117-residue stretch at 29–145 (GSFWIQTFGC…LEALLTQVDN (117 aa)) folds into the MTTase N-terminal domain. [4Fe-4S] cluster contacts are provided by Cys-38, Cys-74, Cys-108, Cys-180, Cys-184, and Cys-187. One can recognise a Radical SAM core domain in the interval 166–403 (RDSTICAWVN…NALVERIALQ (238 aa)). In terms of domain architecture, TRAM spans 406–474 (SRYSGKVEQV…AFSLSGTPCE (69 aa)).

The protein belongs to the methylthiotransferase family. MiaB subfamily. As to quaternary structure, monomer. [4Fe-4S] cluster serves as cofactor.

It localises to the cytoplasm. It catalyses the reaction N(6)-dimethylallyladenosine(37) in tRNA + (sulfur carrier)-SH + AH2 + 2 S-adenosyl-L-methionine = 2-methylsulfanyl-N(6)-dimethylallyladenosine(37) in tRNA + (sulfur carrier)-H + 5'-deoxyadenosine + L-methionine + A + S-adenosyl-L-homocysteine + 2 H(+). Functionally, catalyzes the methylthiolation of N6-(dimethylallyl)adenosine (i(6)A), leading to the formation of 2-methylthio-N6-(dimethylallyl)adenosine (ms(2)i(6)A) at position 37 in tRNAs that read codons beginning with uridine. This chain is tRNA-2-methylthio-N(6)-dimethylallyladenosine synthase, found in Prochlorococcus marinus (strain MIT 9313).